A 211-amino-acid chain; its full sequence is Protein-L-isoaspartate O-methyltransferase (211 aa).

Residue Ser60 is part of the active site.

Belongs to the methyltransferase superfamily. L-isoaspartyl/D-aspartyl protein methyltransferase family.

The protein localises to the cytoplasm. It catalyses the reaction [protein]-L-isoaspartate + S-adenosyl-L-methionine = [protein]-L-isoaspartate alpha-methyl ester + S-adenosyl-L-homocysteine. Functionally, catalyzes the methyl esterification of L-isoaspartyl residues in peptides and proteins that result from spontaneous decomposition of normal L-aspartyl and L-asparaginyl residues. It plays a role in the repair and/or degradation of damaged proteins. In Hahella chejuensis (strain KCTC 2396), this protein is Protein-L-isoaspartate O-methyltransferase.